The sequence spans 193 residues: Ion-translocating oxidoreductase complex subunit A (193 aa).

A run of 6 helical transmembrane segments spans residues 5-25 (LLLL…FLGL), 39-59 (VGMG…AYLV), 72-92 (LSTL…EMVI), 102-122 (ILGI…LALL), 134-154 (VVYG…FASL), and 170-190 (IAIG…FTGL).

It belongs to the NqrDE/RnfAE family. As to quaternary structure, the complex is composed of six subunits: RnfA, RnfB, RnfC, RnfD, RnfE and RnfG.

The protein localises to the cell inner membrane. Its function is as follows. Part of a membrane-bound complex that couples electron transfer with translocation of ions across the membrane. The sequence is that of Ion-translocating oxidoreductase complex subunit A from Tolumonas auensis (strain DSM 9187 / NBRC 110442 / TA 4).